The primary structure comprises 198 residues: Paired-like homeodomain transcription factor LEUTX (198 aa).

Positions 33 to 67 form a DNA-binding region, homeobox; the sequence is PSLATMGKLASKLQLDLSVVKIWFKNQRAKWKRQQ. The segment at 65 to 133 is disordered; that stretch reads RQQRQQMQTR…PGGASASARV (69 aa). Residues 79-190 are LEUTX region; the sequence is PANQTTSVKK…NQYLFPVCLE (112 aa). The span at 110 to 119 shows a compositional bias: basic and acidic residues; sequence ANDHDLREPS. Short sequence motifs (9aaTAD) lie at residues 125-136, 153-161, 163-171, and 178-186; these read GGASASARVSSW, PPWASTLFE, DEFVKIYDL, and SSLNQYLFP.

It belongs to the paired homeobox family.

It localises to the nucleus. Functionally, paired-like homeobox transcription factor involved in embryogenesis. May act as a regulator of embryo genome activation. Binds to a 36 bp DNA elements containing a 5'-TAATCC-3' sequence motif, referred to as EEA motif (EGA-enriched Alu-motif), present in the promoters of target genes activated in early embryos. Inactive transcriptional activity. In Homo sapiens (Human), this protein is Paired-like homeodomain transcription factor LEUTX.